Here is a 231-residue protein sequence, read N- to C-terminus: Ribosomal RNA large subunit methyltransferase E (231 aa).

Positions 76, 78, 99, 115, and 139 each coordinate S-adenosyl-L-methionine. The active-site Proton acceptor is lysine 179.

Belongs to the class I-like SAM-binding methyltransferase superfamily. RNA methyltransferase RlmE family.

Its subcellular location is the cytoplasm. The catalysed reaction is uridine(2552) in 23S rRNA + S-adenosyl-L-methionine = 2'-O-methyluridine(2552) in 23S rRNA + S-adenosyl-L-homocysteine + H(+). In terms of biological role, specifically methylates the uridine in position 2552 of 23S rRNA at the 2'-O position of the ribose in the fully assembled 50S ribosomal subunit. In Bradyrhizobium sp. (strain BTAi1 / ATCC BAA-1182), this protein is Ribosomal RNA large subunit methyltransferase E.